Here is a 302-residue protein sequence, read N- to C-terminus: Probable alpha-L-glutamate ligase (302 aa).

The ATP-grasp domain occupies 104 to 287 (MQLLSREGVG…VAGMIIEFIE (184 aa)). ATP is bound by residues Lys-141, 178 to 179 (EF), Asp-187, and 211 to 213 (RSN). Asp-248, Glu-260, and Asn-262 together coordinate Mg(2+). Mn(2+)-binding residues include Asp-248, Glu-260, and Asn-262.

The protein belongs to the RimK family. Requires Mg(2+) as cofactor. It depends on Mn(2+) as a cofactor.

The protein is Probable alpha-L-glutamate ligase of Halorhodospira halophila (strain DSM 244 / SL1) (Ectothiorhodospira halophila (strain DSM 244 / SL1)).